A 326-amino-acid polypeptide reads, in one-letter code: Phospho-N-acetylmuramoyl-pentapeptide-transferase (326 aa).

9 consecutive transmembrane segments (helical) span residues 3–23 (ISIS…PAFI), 51–71 (TMGG…FALF), 79–99 (VGMI…DDFL), 115–135 (LALQ…GGDI), 138–158 (VFGY…FWLV), 169–189 (GVDG…GVIA), 195–215 (MDIL…FIFN), 221–243 (VFMG…MALH), and 306–326 (FFFW…LYLM).

It belongs to the glycosyltransferase 4 family. MraY subfamily. Mg(2+) is required as a cofactor.

The protein resides in the cell membrane. It carries out the reaction UDP-N-acetyl-alpha-D-muramoyl-L-alanyl-gamma-D-glutamyl-L-lysyl-D-alanyl-D-alanine + di-trans,octa-cis-undecaprenyl phosphate = Mur2Ac(oyl-L-Ala-gamma-D-Glu-L-Lys-D-Ala-D-Ala)-di-trans,octa-cis-undecaprenyl diphosphate + UMP. It functions in the pathway cell wall biogenesis; peptidoglycan biosynthesis. Functionally, catalyzes the initial step of the lipid cycle reactions in the biosynthesis of the cell wall peptidoglycan: transfers peptidoglycan precursor phospho-MurNAc-pentapeptide from UDP-MurNAc-pentapeptide onto the lipid carrier undecaprenyl phosphate, yielding undecaprenyl-pyrophosphoryl-MurNAc-pentapeptide, known as lipid I. This Streptococcus pneumoniae serotype 19F (strain G54) protein is Phospho-N-acetylmuramoyl-pentapeptide-transferase.